Consider the following 88-residue polypeptide: Small ribosomal subunit protein uS17 (88 aa).

The protein belongs to the universal ribosomal protein uS17 family. As to quaternary structure, part of the 30S ribosomal subunit.

One of the primary rRNA binding proteins, it binds specifically to the 5'-end of 16S ribosomal RNA. This is Small ribosomal subunit protein uS17 from Nitratidesulfovibrio vulgaris (strain ATCC 29579 / DSM 644 / CCUG 34227 / NCIMB 8303 / VKM B-1760 / Hildenborough) (Desulfovibrio vulgaris).